The chain runs to 371 residues: Cuticle collagen 71 (371 aa).

The helical transmembrane segment at 38-60 (GYAAVTFSTVSVICFCVTMPVVF) threads the bilayer. Disordered stretches follow at residues 108–127 (AGYD…GGDA) and 153–371 (EGPH…GTRR). The segment covering 174–186 (PGPPGPPGPPGRP) has biased composition (pro residues). Over residues 188–201 (PNGKAGANGLNGNP) the composition is skewed to low complexity. Over residues 202-222 (GRPPEAPCEPVTPPPCPPCPA) the composition is skewed to pro residues. Over residues 223-240 (GPKGAPGQAGYPGADGQP) the composition is skewed to low complexity. Positions 223-280 (GPKGAPGQAGYPGADGQPGSQGDNGEKGSDGAAGEKGRPGPLGKIGEPGATGETGENA) constitute a Collagen-like domain. Residues 246-260 (NGEKGSDGAAGEKGR) show a composition bias toward basic and acidic residues. Over residues 314–323 (AGAPGAPGEN) the composition is skewed to low complexity. The segment covering 340–349 (HDGKAGRAGE) has biased composition (basic and acidic residues).

This sequence belongs to the cuticular collagen family. In terms of assembly, collagen polypeptide chains are complexed within the cuticle by disulfide bonds and other types of covalent cross-links.

It is found in the membrane. The protein localises to the nucleus. Its function is as follows. Probable cuticular collagen-like protein. Nematode cuticles are composed largely of collagen-like proteins. The cuticle functions both as an exoskeleton and as a barrier to protect the worm from its environment. Acts downstream of the Wnt signaling pathway, perhaps in the formation of the adult cuticle. The polypeptide is Cuticle collagen 71 (Caenorhabditis elegans).